A 320-amino-acid chain; its full sequence is Tyrosine recombinase XerC (320 aa).

The Core-binding (CB) domain maps to 14 to 104; the sequence is ADVREAVASW…SLRSFARHLE (91 aa). Residues 125 to 311 enclose the Tyr recombinase domain; that stretch reads RLPRPLPVAA…DSARLMSAFE (187 aa). Catalysis depends on residues Arg-170, Lys-195, His-263, Arg-266, and His-289. Tyr-298 functions as the O-(3'-phospho-DNA)-tyrosine intermediate in the catalytic mechanism.

This sequence belongs to the 'phage' integrase family. XerC subfamily. In terms of assembly, forms a cyclic heterotetrameric complex composed of two molecules of XerC and two molecules of XerD.

Its subcellular location is the cytoplasm. In terms of biological role, site-specific tyrosine recombinase, which acts by catalyzing the cutting and rejoining of the recombining DNA molecules. The XerC-XerD complex is essential to convert dimers of the bacterial chromosome into monomers to permit their segregation at cell division. It also contributes to the segregational stability of plasmids. This Methylobacterium sp. (strain 4-46) protein is Tyrosine recombinase XerC.